A 233-amino-acid polypeptide reads, in one-letter code: MGQKVHPNGIRLGIVKPWNSTWYANTKEFADNLDSDFKVRQYLKKELAKASISRIVIERPAKSIRVTIHTARPGIVIGKKGEDVEKLRKTVAEIAGVPAQINISEVRKPELDAKLVADSITSQLERRIMFRRAMKRAVQNAMRQGAKGIKVEVSGRLGGAEIARPEWYREGRVPLHTLRADIDYNTSEAHTTYGVLGVKVWIFKGEILGGMAAVEQAEKPAAQPKKQQRKGRK.

The KH type-2 domain maps to 39–107 (VRQYLKKELA…PAQINISEVR (69 aa)).

Belongs to the universal ribosomal protein uS3 family. Part of the 30S ribosomal subunit. Forms a tight complex with proteins S10 and S14.

Functionally, binds the lower part of the 30S subunit head. Binds mRNA in the 70S ribosome, positioning it for translation. The sequence is that of Small ribosomal subunit protein uS3 from Photorhabdus laumondii subsp. laumondii (strain DSM 15139 / CIP 105565 / TT01) (Photorhabdus luminescens subsp. laumondii).